We begin with the raw amino-acid sequence, 111 residues long: uncharacterized protein (111 aa).

A run of 2 helical transmembrane segments spans residues 27–47 (IIVL…GYKF) and 80–100 (IFTG…ISAI).

The protein localises to the membrane. This is an uncharacterized protein from Acanthamoeba polyphaga (Amoeba).